A 400-amino-acid chain; its full sequence is NADH-quinone oxidoreductase subunit D (400 aa).

It belongs to the complex I 49 kDa subunit family. In terms of assembly, NDH-1 is composed of 14 different subunits. Subunits NuoB, C, D, E, F, and G constitute the peripheral sector of the complex.

Its subcellular location is the cell inner membrane. It catalyses the reaction a quinone + NADH + 5 H(+)(in) = a quinol + NAD(+) + 4 H(+)(out). NDH-1 shuttles electrons from NADH, via FMN and iron-sulfur (Fe-S) centers, to quinones in the respiratory chain. The immediate electron acceptor for the enzyme in this species is believed to be a menaquinone. Couples the redox reaction to proton translocation (for every two electrons transferred, four hydrogen ions are translocated across the cytoplasmic membrane), and thus conserves the redox energy in a proton gradient. This is NADH-quinone oxidoreductase subunit D from Chlorobium chlorochromatii (strain CaD3).